The sequence spans 108 residues: Holo-[acyl-carrier-protein] synthase (108 aa).

Mg(2+)-binding residues include Asp9 and Glu54.

Belongs to the P-Pant transferase superfamily. AcpS family. Mg(2+) is required as a cofactor.

The protein localises to the cytoplasm. It catalyses the reaction apo-[ACP] + CoA = holo-[ACP] + adenosine 3',5'-bisphosphate + H(+). Its function is as follows. Transfers the 4'-phosphopantetheine moiety from coenzyme A to a Ser of acyl-carrier-protein. The polypeptide is Holo-[acyl-carrier-protein] synthase (Mycoplasmopsis pulmonis (strain UAB CTIP) (Mycoplasma pulmonis)).